Consider the following 220-residue polypeptide: Histone deacetylase complex subunit SAP30 (220 aa).

Residues 1-129 (MNGFTPEEMS…QSVRNRRKRK (129 aa)) form an interaction with NCOR1 region. Position 5 is a phosphothreonine (T5). Residues 67–115 (CCLREDGERCGRAAGNASFSKRIQKSISQKKVKIELDKSARHLYICDYH) form an Atypical zinc finger. K87 is covalently cross-linked (Glycyl lysine isopeptide (Lys-Gly) (interchain with G-Cter in SUMO2)). Residues 123–143 (RNRRKRKGSDDDGGDSPVQDI) are disordered. The interaction with SIN3A stretch occupies residues 130-220 (GSDDDGGDSP…SDLKADSGVH (91 aa)). Phosphoserine occurs at positions 131 and 138. T145 is modified (phosphothreonine). Glycyl lysine isopeptide (Lys-Gly) (interchain with G-Cter in SUMO2) cross-links involve residues K194 and K214.

It belongs to the SAP30 family. Component of the histone deacetylase complex that includes at least SIN3A, HDAC1 and HDAC2. Found in a complex composed of at least SINHCAF, SIN3A, HDAC1, SAP30, RBBP4, OGT and TET1. Interacts with HDAC1. Interacts with SIN3A, SIN3B, HDAC2, RBBP4 and NCOR1. Interacts directly with SAMSN1. Interacts with HCFC1. Interacts with SAP30BP.

It localises to the nucleus. Functionally, involved in the functional recruitment of the Sin3-histone deacetylase complex (HDAC) to a specific subset of N-CoR corepressor complexes. Capable of transcription repression by N-CoR. Active in deacetylating core histone octamers (when in a complex) but inactive in deacetylating nucleosomal histones. The polypeptide is Histone deacetylase complex subunit SAP30 (Mus musculus (Mouse)).